The following is a 740-amino-acid chain: Elongation factor 2 (740 aa).

The region spanning 23–264 is the tr-type G domain; it reads AQIRNAGTLA…MIIEHVPPPN (242 aa). GTP-binding positions include 32-39, 98-102, and 152-155; these read AHVDHGKT, DTPGH, and NKID. His-605 carries the diphthamide modification.

It belongs to the TRAFAC class translation factor GTPase superfamily. Classic translation factor GTPase family. EF-G/EF-2 subfamily.

The protein resides in the cytoplasm. Catalyzes the GTP-dependent ribosomal translocation step during translation elongation. During this step, the ribosome changes from the pre-translocational (PRE) to the post-translocational (POST) state as the newly formed A-site-bound peptidyl-tRNA and P-site-bound deacylated tRNA move to the P and E sites, respectively. Catalyzes the coordinated movement of the two tRNA molecules, the mRNA and conformational changes in the ribosome. This is Elongation factor 2 from Pyrobaculum calidifontis (strain DSM 21063 / JCM 11548 / VA1).